The chain runs to 96 residues: Protein Vpr (96 aa).

Positions 1–42 are homooligomerization; the sequence is MEQAPEDQGPQREPYNEWTLELLEELKSEAVRHFPRLWLHSL. Phosphoserine; by host occurs at positions 79, 94, and 96.

This sequence belongs to the HIV-1 VPR protein family. As to quaternary structure, homooligomer, may form homodimer. Interacts with p6-gag region of the Pr55 Gag precursor protein through a (Leu-X-X)4 motif near the C-terminus of the P6gag protein. Interacts with host UNG. May interact with host RAD23A/HHR23A. Interacts with host VPRBP/DCAF1, leading to hijack the CUL4A-RBX1-DDB1-DCAF1/VPRBP complex, mediating ubiquitination of host proteins such as TERT and ZGPAT and arrest of the cell cycle in G2 phase. Post-translationally, phosphorylated on several residues by host. These phosphorylations regulate VPR activity for the nuclear import of the HIV-1 pre-integration complex.

Its subcellular location is the virion. It localises to the host nucleus. The protein resides in the host extracellular space. In terms of biological role, during virus replication, may deplete host UNG protein, and incude G2-M cell cycle arrest. Acts by targeting specific host proteins for degradation by the 26S proteasome, through association with the cellular CUL4A-DDB1 E3 ligase complex by direct interaction with host VPRPB/DCAF-1. Cell cycle arrest reportedly occurs within hours of infection and is not blocked by antiviral agents, suggesting that it is initiated by the VPR carried into the virion. Additionally, VPR induces apoptosis in a cell cycle dependent manner suggesting that these two effects are mechanistically linked. Detected in the serum and cerebrospinal fluid of AIDS patient, VPR may also induce cell death to bystander cells. Functionally, during virus entry, plays a role in the transport of the viral pre-integration (PIC) complex to the host nucleus. This function is crucial for viral infection of non-dividing macrophages. May act directly at the nuclear pore complex, by binding nucleoporins phenylalanine-glycine (FG)-repeat regions. This chain is Protein Vpr, found in Human immunodeficiency virus type 1 group M subtype B (isolate RF/HAT3) (HIV-1).